A 208-amino-acid chain; its full sequence is Uracil phosphoribosyltransferase (208 aa).

5-phospho-alpha-D-ribose 1-diphosphate is bound by residues Arg78, Arg103, and Asp130 to Ser138. Uracil is bound by residues Ile193 and Gly198–Ala200. Asp199 is a 5-phospho-alpha-D-ribose 1-diphosphate binding site.

It belongs to the UPRTase family. Mg(2+) is required as a cofactor.

It carries out the reaction UMP + diphosphate = 5-phospho-alpha-D-ribose 1-diphosphate + uracil. It participates in pyrimidine metabolism; UMP biosynthesis via salvage pathway; UMP from uracil: step 1/1. Allosterically activated by GTP. Its function is as follows. Catalyzes the conversion of uracil and 5-phospho-alpha-D-ribose 1-diphosphate (PRPP) to UMP and diphosphate. This Proteus mirabilis (strain HI4320) protein is Uracil phosphoribosyltransferase.